The primary structure comprises 791 residues: RAS guanyl-releasing protein 1 (791 aa).

An N-terminal Ras-GEF domain is found at 49–172 (LGKLSKGASL…RLIDTAQINS (124 aa)). Positions 53-106 (SKGASLDDLIQMCIQAFDLDGNMGQNSELLQIMLTMHGFLLPSTELLMKLRTLY) are ras exchanger motif region; required for transforming activity. The 232-residue stretch at 201–432 (EPQELAEHLT…YELSYAREPR (232 aa)) folds into the Ras-GEF domain. 2 EF-hand domains span residues 466–501 (HVQR…FPFS) and 502–528 (FCVM…ASSI). Ca(2+)-binding residues include Asp-479, Asp-481, Asp-483, Tyr-485, Glu-490, Asp-506, Asp-508, Glu-510, and Glu-517. A Phorbol-ester/DAG-type zinc finger spans residues 537–587 (LHNFQETTYLRPTFCDNCAGFLWGVIKQGYRCKDCGMNCHKQCKELVVFEC). Polar residues predominate over residues 683 to 695 (QVPSPQRSRTPGL). The disordered stretch occupies residues 683-715 (QVPSPQRSRTPGLTSHLPISPMPSPCPSPVPTR). Residues 702–712 (SPMPSPCPSPV) are compositionally biased toward pro residues. Positions 728-785 (IRKARAELRGGKAGIQELEKEKALLKEENTTLKIQLKDAQRRVETLRAELRKYVLDSD) form a coiled coil.

The protein belongs to the RASGRP family.

The protein localises to the cytoplasm. The protein resides in the cytosol. Its subcellular location is the cell membrane. It localises to the golgi apparatus membrane. It is found in the endoplasmic reticulum membrane. Its activity is regulated as follows. Regulated by F-actin polymerization and probably by calcium. In terms of biological role, functions as a diacylglycerol (DAG)-regulated nucleotide exchange factor specifically activating Ras through the exchange of bound GDP for GTP. This is RAS guanyl-releasing protein 1 (rasgrp1) from Xenopus tropicalis (Western clawed frog).